The following is a 211-amino-acid chain: Molybdenum cofactor guanylyltransferase (211 aa).

GTP contacts are provided by residues 12 to 14 (LAG), Lys25, Asn55, Asp73, and Asp103. Mg(2+) is bound at residue Asp103.

Belongs to the MobA family. In terms of assembly, monomer. Mg(2+) is required as a cofactor.

It localises to the cytoplasm. The catalysed reaction is Mo-molybdopterin + GTP + H(+) = Mo-molybdopterin guanine dinucleotide + diphosphate. Its function is as follows. Transfers a GMP moiety from GTP to Mo-molybdopterin (Mo-MPT) cofactor (Moco or molybdenum cofactor) to form Mo-molybdopterin guanine dinucleotide (Mo-MGD) cofactor. This chain is Molybdenum cofactor guanylyltransferase, found in Albidiferax ferrireducens (strain ATCC BAA-621 / DSM 15236 / T118) (Rhodoferax ferrireducens).